The sequence spans 646 residues: Leukotriene A-4 hydrolase homolog (646 aa).

Residues 172-174 and 307-312 each bind a peptide; these read QCQ and PYGGME. Zn(2+) is bound at residue histidine 336. Catalysis depends on glutamate 337, which acts as the Proton acceptor. Zn(2+) is bound by residues histidine 340 and glutamate 359. Residue tyrosine 424 is the Proton donor of the active site.

This sequence belongs to the peptidase M1 family. Zn(2+) is required as a cofactor.

Its subcellular location is the cytoplasm. It is found in the nucleus. It catalyses the reaction leukotriene A4 + H2O = leukotriene B4. Its pathway is lipid metabolism; leukotriene B4 biosynthesis. Its function is as follows. Aminopeptidase that preferentially cleaves tripeptides. Also has low epoxide hydrolase activity (in vitro). Can hydrolyze an epoxide moiety of LTA(4) to form LTB(4) (in vitro). This chain is Leukotriene A-4 hydrolase homolog, found in Botryotinia fuckeliana (strain B05.10) (Noble rot fungus).